The chain runs to 1320 residues: Sister chromatid cohesion protein PDS5 homolog A (1320 aa).

HEAT repeat units lie at residues 156 to 195, 272 to 310, 388 to 426, 709 to 747, and 990 to 1028; these read NEIF…EGDG, PLLL…AKDS, NLVN…KYCL, PQIR…NKEV, and SLLP…CLWF. The span at 1158–1179 shows a compositional bias: polar residues; it reads TFTSETGSNASTNSQPSSPATN. The tract at residues 1158–1320 is disordered; the sequence is TFTSETGSNA…APQRQIDLQR (163 aa). Positions 1180–1194 are enriched in basic and acidic residues; that stretch reads KSRDVSSEVGARENE. Residues 1225–1241 show a composition bias toward polar residues; that stretch reads GTENSVSSNPSAGSQPP. Residues 1255-1267 are compositionally biased toward low complexity; that stretch reads AGAATQEKEAGAT. The span at 1283-1293 shows a compositional bias: polar residues; it reads QDPSSTASTDA. Over residues 1294–1309 the composition is skewed to basic and acidic residues; the sequence is LSDKTPKQQKEAEPKR.

Belongs to the PDS5 family. In terms of assembly, interacts with the cohesin complex. Binds chromatin in a cohesin-dependent manner.

Its subcellular location is the nucleus. In terms of biological role, may regulate sister chromatid cohesion during mitosis and couple it to DNA replication. This chain is Sister chromatid cohesion protein PDS5 homolog A, found in Danio rerio (Zebrafish).